The chain runs to 450 residues: Phosphoglucosamine mutase (450 aa).

The active-site Phosphoserine intermediate is S102. S102, D243, D245, and D247 together coordinate Mg(2+). Residue S102 is modified to Phosphoserine.

Belongs to the phosphohexose mutase family. Mg(2+) is required as a cofactor. In terms of processing, activated by phosphorylation.

It carries out the reaction alpha-D-glucosamine 1-phosphate = D-glucosamine 6-phosphate. Catalyzes the conversion of glucosamine-6-phosphate to glucosamine-1-phosphate. In Mesorhizobium japonicum (strain LMG 29417 / CECT 9101 / MAFF 303099) (Mesorhizobium loti (strain MAFF 303099)), this protein is Phosphoglucosamine mutase.